A 638-amino-acid polypeptide reads, in one-letter code: Zinc finger protein 143 (638 aa).

Residue Met-1 is modified to N-acetylmethionine. Residue Lys-213 forms a Glycyl lysine isopeptide (Lys-Gly) (interchain with G-Cter in SUMO2) linkage. 4 C2H2-type zinc fingers span residues 237 to 261, 267 to 291, 297 to 321, and 327 to 351; these read FRCK…ERSH, YQCE…FRTH, YRCS…IRTH, and FKCP…IRTH. The residue at position 352 (Thr-352) is a Phosphothreonine. C2H2-type zinc fingers lie at residues 357–381, 387–411, and 417–440; these read YYCT…VRIH, YVCT…HVVH, and YNCN…RTAH. Lys-406 is covalently cross-linked (Glycyl lysine isopeptide (Lys-Gly) (interchain with G-Cter in SUMO2)).

It belongs to the GLI C2H2-type zinc-finger protein family. As to quaternary structure, interacts with CHD8. Forms a complex with HCFC1 and ZNF143.

It localises to the nucleus. In terms of biological role, transcriptional activator. In complex with HCFC1 and ZNF143, regulates the expression of several genes, including AP2S1, ESCO2, OPHN1, RBL1, UBXN8 and ZNF32. Activates the gene for selenocysteine tRNA (tRNAsec). Binds to the SPH motif of small nuclear RNA (snRNA) gene promoters. Participates in efficient U6 RNA polymerase III transcription via its interaction with CHD8. This chain is Zinc finger protein 143 (Znf143), found in Rattus norvegicus (Rat).